The primary structure comprises 167 residues: Small ribosomal subunit protein uS5 (167 aa).

In terms of domain architecture, S5 DRBM spans 12 to 75 (LQEKLVQVNR…DAARKNMITV (64 aa)).

The protein belongs to the universal ribosomal protein uS5 family. In terms of assembly, part of the 30S ribosomal subunit. Contacts proteins S4 and S8.

Its function is as follows. With S4 and S12 plays an important role in translational accuracy. Functionally, located at the back of the 30S subunit body where it stabilizes the conformation of the head with respect to the body. The chain is Small ribosomal subunit protein uS5 from Hahella chejuensis (strain KCTC 2396).